The following is a 127-amino-acid chain: Putative B3 domain-containing protein At4g12617 (127 aa).

Positions 35 to 127 (IMMPKTLLEA…HTRLNFKHVA (93 aa)) form a DNA-binding region, TF-B3.

The protein localises to the nucleus. The sequence is that of Putative B3 domain-containing protein At4g12617 from Arabidopsis thaliana (Mouse-ear cress).